We begin with the raw amino-acid sequence, 784 residues long: uncharacterized protein (784 aa).

The region spanning 422–619 (IRIVQNEQDL…EVFQKIVEVV (198 aa)) is the 3'-5' exonuclease domain.

This is an uncharacterized protein from Caenorhabditis elegans.